Here is a 449-residue protein sequence, read N- to C-terminus: Maturation protein A (449 aa).

It belongs to the Leviviricetes maturation protein family. Interacts with the host pilus.

The protein localises to the virion. Functionally, the maturation protein is required for the typical attachment of the phage to the side of the bacterial F-pili. Binds to sequences located toward each end of the genome, hence circularizing it. The RNA genome-maturation protein A complex is released from the capsid upon host receptor binding. Maturation protein A enters the cell along with the viral RNA. This Pseudomonas aeruginosa (Bacteriophage PP7) protein is Maturation protein A.